The sequence spans 479 residues: GMP reductase (479 aa).

CBS domains lie at 96 to 153 (VLDT…VRDI) and 154 to 212 (AVTD…ATDS). NADP(+) is bound by residues 246–248 (DTA) and 296–298 (GVG). Catalysis depends on cysteine 303, which acts as the Thioimidate intermediate.

Belongs to the IMPDH/GMPR family. GuaB1 subfamily. Requires a monovalent cation as cofactor.

The enzyme catalyses IMP + NH4(+) + NADP(+) = GMP + NADPH + 2 H(+). Its pathway is purine metabolism; IMP biosynthesis via salvage pathway. In terms of biological role, involved in the purine-salvage pathway. Catalyzes the NADPH-dependent conversion of GMP to IMP. The chain is GMP reductase from Mycobacterium bovis (strain ATCC BAA-935 / AF2122/97).